Here is a 357-residue protein sequence, read N- to C-terminus: MVRLTVDLIAKNSNLKPRKEETLAQCLKKITHINFSDRNIDSIDDLSLCRNLSVLYLYDNRISQVTNLNYTTNLTHLYLQNNCISCIENLSSLKKLEKLYLGGNYIAVIEGLEGLEELRELHVESQRLPLGEKLLFDPRTLRSLAKSLSTLNISNNNIDDIKDLEILENLNHLIAVDNQLMHVKDLELLLKKLMKLWKMDLNGNPVCLKPKYRDKLILTSKSLEFLDGKEIKDMERQFLMNWKASKDAKKISKKRRSRSEDASNSYISNFETVHHIVPVYYPQVGKPKVIFFSDVQRYLVHGNASSKCSQEDKTTITEDIGNLSLKESESSLTKNDIHEPHLLQNPKVKENLSEKKE.

7 LRR repeats span residues 29–50 (KITH…SLCR), 51–72 (NLSV…NYTT), 73–94 (NLTH…SSLK), 95–116 (KLEK…EGLE), 117–138 (ELRE…LFDP), 147–168 (SLST…EILE), and 169–190 (NLNH…ELLL). The 39-residue stretch at 204-242 (NPVCLKPKYRDKLILTSKSLEFLDGKEIKDMERQFLMNW) folds into the LRRCT domain. The tract at residues 329 to 357 (ESSLTKNDIHEPHLLQNPKVKENLSEKKE) is disordered. A compositionally biased stretch (basic and acidic residues) spans 335–357 (NDIHEPHLLQNPKVKENLSEKKE).

In terms of assembly, interacts with PPP1CC isoform gamma-2; the interaction is direct. Interacts with actin, dynein, KIF5B, KIFC1 and tubulin. Associates with microtubules. Phosphorylated; during the first round of spermatogenesis with a marginal increase at 21 days after birth. Testis-specific. Expressed in spermatids (at protein level). Testis-specific.

It is found in the cytoplasm. Its subcellular location is the cytoskeleton. It localises to the microtubule organizing center. The protein resides in the centrosome. Functionally, regulates phosphatase activity of protein phosphatase 1 (PP1) complexes in the testis. The sequence is that of Protein phosphatase 1 regulatory subunit 42 (Ppp1r42) from Mus musculus (Mouse).